The following is a 568-amino-acid chain: Urease subunit alpha (568 aa).

One can recognise a Urease domain in the interval Gly-129–Phe-568. Ni(2+) is bound by residues His-134, His-136, and Lys-217. Position 217 is an N6-carboxylysine (Lys-217). Position 219 (His-219) interacts with substrate. Residues His-246 and His-272 each coordinate Ni(2+). The active-site Proton donor is the His-320. A Ni(2+)-binding site is contributed by Asp-360.

This sequence belongs to the metallo-dependent hydrolases superfamily. Urease alpha subunit family. Heterotrimer of UreA (gamma), UreB (beta) and UreC (alpha) subunits. Three heterotrimers associate to form the active enzyme. The cofactor is Ni cation. Carboxylation allows a single lysine to coordinate two nickel ions.

Its subcellular location is the cytoplasm. It carries out the reaction urea + 2 H2O + H(+) = hydrogencarbonate + 2 NH4(+). It functions in the pathway nitrogen metabolism; urea degradation; CO(2) and NH(3) from urea (urease route): step 1/1. In Saccharophagus degradans (strain 2-40 / ATCC 43961 / DSM 17024), this protein is Urease subunit alpha.